Reading from the N-terminus, the 247-residue chain is MNFVISQHFNEIKYRFLYIFFTFLLCFIICTIYSESIMFFYVHPLINLTSMQGKHLIFTEMSEAFHTYIFLCFFTSIYCTFPYFFYQFWAFFIPSTYQFERLQLRFLSFFFFTLLFFSCIIIYFIILPEIWSFFLHFEKKSYYFNLQLEARISSYIQFTFQIFSYFFVLFQCPLFTHFSLNLNLLTISFLVNSRKYIYFLFLILAAFLSPPDILSQFFLFSLIVFMYELCVFYSCFYDSLRERIKTF.

6 consecutive transmembrane segments (helical) span residues 19 to 39, 73 to 93, 106 to 126, 155 to 175, 196 to 216, and 217 to 237; these read IFFT…SIMF, FFTS…AFFI, FLSF…YFII, YIQF…CPLF, YIYF…ILSQ, and FFLF…SCFY.

The protein belongs to the TatC family.

It is found in the mitochondrion membrane. This is an uncharacterized protein from Nephroselmis olivacea (Green alga).